Here is a 554-residue protein sequence, read N- to C-terminus: Cytochrome c oxidase subunit 1-alpha (554 aa).

The helical transmembrane segment at 26 to 56 threads the bilayer; it reads KDIGVLYLFTAGLAGLISVTLTVYMRMELQH. Residues Cys-63 and Cys-77 are joined by a disulfide bond. A run of 6 helical transmembrane segments spans residues 81-118, 127-148, 175-203, 215-248, 260-295, and 301-319; these read AHLW…LHIG, LNNL…SLLS, AMDL…TFLN, PLFA…DRNF, DPVL…STFA, and GYLP…GFIV. Residue His-91 coordinates Fe(II)-heme a. Cu cation-binding residues include His-273 and Tyr-277. A cross-link (1'-histidyl-3'-tyrosine (His-Tyr)) is located at residues 273-277; that stretch reads HPEVY. Cu cation contacts are provided by His-322 and His-323. 5 helical membrane passes run 331–359, 367–390, 399–425, 436–463, and 478–508; these read LTQQ…IATM, KTPM…VIAQ, DTYY…GTYY, PEWA…FLGR, and SYWN…TLFA. Residue His-406 participates in heme a3 binding. A Fe(II)-heme a-binding site is contributed by His-408.

It belongs to the heme-copper respiratory oxidase family. The cofactor is Cu(2+). It depends on heme as a cofactor.

The protein resides in the cell inner membrane. It catalyses the reaction 4 Fe(II)-[cytochrome c] + O2 + 8 H(+)(in) = 4 Fe(III)-[cytochrome c] + 2 H2O + 4 H(+)(out). Its pathway is energy metabolism; oxidative phosphorylation. Its function is as follows. Subunit I and II form the functional core of the enzyme complex. Electrons originating in cytochrome c are transferred via heme a and Cu(A) to the binuclear center formed by heme a3 and Cu(B). This cytochrome c oxidase shows proton pump activity across the membrane in addition to the electron transfer. The chain is Cytochrome c oxidase subunit 1-alpha (ctaDI) from Paracoccus denitrificans.